Here is a 416-residue protein sequence, read N- to C-terminus: Serine hydroxymethyltransferase (416 aa).

(6S)-5,6,7,8-tetrahydrofolate is bound by residues Leu-118 and 122–124 (GHL). Lys-226 bears the N6-(pyridoxal phosphate)lysine mark. Residues Glu-242 and 350-352 (SPF) each bind (6S)-5,6,7,8-tetrahydrofolate.

Belongs to the SHMT family. In terms of assembly, homodimer. It depends on pyridoxal 5'-phosphate as a cofactor.

Its subcellular location is the cytoplasm. It carries out the reaction (6R)-5,10-methylene-5,6,7,8-tetrahydrofolate + glycine + H2O = (6S)-5,6,7,8-tetrahydrofolate + L-serine. It functions in the pathway one-carbon metabolism; tetrahydrofolate interconversion. Its pathway is amino-acid biosynthesis; glycine biosynthesis; glycine from L-serine: step 1/1. Functionally, catalyzes the reversible interconversion of serine and glycine with tetrahydrofolate (THF) serving as the one-carbon carrier. This reaction serves as the major source of one-carbon groups required for the biosynthesis of purines, thymidylate, methionine, and other important biomolecules. Also exhibits THF-independent aldolase activity toward beta-hydroxyamino acids, producing glycine and aldehydes, via a retro-aldol mechanism. In Helicobacter pylori (strain Shi470), this protein is Serine hydroxymethyltransferase.